Consider the following 414-residue polypeptide: WW domain-containing oxidoreductase (414 aa).

The tract at residues 1 to 23 (MAALRYAGLDDTDSEDELPPGWE) is disordered. Phosphothreonine is present on T12. A Phosphoserine modification is found at S14. The region spanning 16 to 49 (DELPPGWEERTTKDGWVYYANHTEEKTQWEHPKT) is the WW 1 domain. Residue Y33 is modified to Phosphotyrosine. A Nuclear localization signal motif is present at residues 50–55 (GKRKRV). The WW 2 domain occupies 57–90 (GDLPYGWEQETDENGQVFFVDHINKRTTYLDPRL). The interval 125–414 (KVVVVTGANS…IQERLGSQSG (290 aa)) is interaction with MAPT. Residue 131 to 137 (GANSGIG) coordinates NADP(+). Residues 209 to 273 (CNAATFALPW…RFTDINDSLG (65 aa)) form a mediates targeting to the mitochondria region. S260 lines the substrate pocket. Y287 bears the Phosphotyrosine; by TNK2 mark. The Proton acceptor role is filled by Y293.

The protein belongs to the short-chain dehydrogenases/reductases (SDR) family. Interacts with TP53, p73/TP73 and MAPK8. Interacts with MAPT/TAU, RUNX2 and HYAL2. Forms a ternary complex with TP53 and MDM2. Interacts with ERBB4, LITAF and WBP1. Interacts with DVL1, DVL2 and DVL3. May interact with FAM189B and SCOTIN. Interacts with TNK2. Interacts with TMEM207. Interacts (via WW domain) with VOPP1. In terms of processing, phosphorylated upon genotoxic stress. Phosphorylation of Tyr-33 regulates interaction with TP53, TP73 and MAPK8. May also regulate proapoptotic activity. Phosphorylation by TNK2 is associated with polyubiquitination and degradation. Ubiquitinated when phosphorylated by TNK2, leading to its degradation. In terms of tissue distribution, widely expressed. Strongly expressed in testis, prostate, and ovary. Overexpressed in cancer cell lines. Isoform 5 and isoform 6 may only be expressed in tumor cell lines.

The protein resides in the cytoplasm. Its subcellular location is the nucleus. It localises to the mitochondrion. It is found in the golgi apparatus. The protein localises to the lysosome. Putative oxidoreductase. Acts as a tumor suppressor and plays a role in apoptosis. Required for normal bone development. May function synergistically with p53/TP53 to control genotoxic stress-induced cell death. Plays a role in TGFB1 signaling and TGFB1-mediated cell death. May also play a role in tumor necrosis factor (TNF)-mediated cell death. Inhibits Wnt signaling, probably by sequestering DVL2 in the cytoplasm. The polypeptide is WW domain-containing oxidoreductase (WWOX) (Homo sapiens (Human)).